We begin with the raw amino-acid sequence, 755 residues long: SWI/SNF-related matrix-associated actin-dependent regulator of chromatin subfamily A-like protein 1 (755 aa).

Positions 7 to 27 form a coiled coil; sequence SEIAEKKRIALAKLQAKKSQL. Disordered stretches follow at residues 26–91 and 104–134; these read QLLA…NKSS and SNRE…SLSS. Over residues 32-63 the composition is skewed to polar residues; sequence PATNGKSTTSATGATQHANNGKSNPNQPQAKS. At S63 the chain carries Phosphoserine. Positions 139–217 constitute an HARP domain; that stretch reads PVAVLLGNSI…KPYVHMNGIP (79 aa). The region spanning 256–412 is the Helicase ATP-binding domain; the sequence is CFAIAQKGRI…FTQLQMIDGK (157 aa). 269-276 is an ATP binding site; sequence DEMGLGKT. The short motif at 361–364 is the DESH box element; sequence DESH. A Helicase C-terminal domain is found at 527–681; it reads YLKTLVKEQK…NLQKATHTAA (155 aa).

It belongs to the SNF2/RAD54 helicase family. SMARCAL1 subfamily.

The protein resides in the nucleus. ATP-dependent annealing helicase that catalyzes the rewinding of the stably unwound DNA. In Drosophila melanogaster (Fruit fly), this protein is SWI/SNF-related matrix-associated actin-dependent regulator of chromatin subfamily A-like protein 1 (Marcal1).